The chain runs to 249 residues: Proline-rich antigen (249 aa).

2 stretches are compositionally biased toward pro residues: residues 1–20 (MTDQ…PPPG) and 38–87 (YPPP…PPGP). Residues 1–87 (MTDQPPPSGS…GAYAPPPPGP (87 aa)) form a disordered region. The 1-1; approximate repeat unit spans residues 34-43 (LGSAYPPPTA). Positions 34–85 (LGSAYPPPTAPPVGGSYPPPPPPGGSYPPPPPPGGSYPPPPPSTGAYAPPPP) are 5 X 10 AA tandem repeats of [PV]-G-G-S-Y-P-P-P-P-P. Tandem repeats lie at residues 46–55 (VGGSYPPPPP), 56–65 (PGGSYPPPPP), and 66–75 (PGGSYPPPPP). A 1-5; approximate repeat occupies 76-85 (STGAYAPPPP). The RDD domain occupies 99–242 (FWVTRVLAYV…KRQTLADKIM (144 aa)). Repeat copies occupy residues 101–123 (VTRV…IGML) and 134–156 (VTDI…IGML). Positions 101-156 (VTRVLAYVIDNIPATVLLGIGMLIQTLTKQEACVTDITQYNVNQYCATQPTGIGML) are 2 X 23 AA approximate repeats. The next 3 helical transmembrane spans lie at 104–124 (VLAY…GMLI), 151–171 (TGIG…YLVW), and 212–232 (LAHF…LWDS).

It belongs to the mycobacterial Pra family.

The protein resides in the cell membrane. This chain is Proline-rich antigen (ag36), found in Mycobacterium leprae (strain TN).